Reading from the N-terminus, the 257-residue chain is S-methyl-5'-thioadenosine phosphorylase (257 aa).

Phosphate is bound by residues Ser-10 and 50 to 51 (RH). A substrate-binding site is contributed by Met-180. Thr-181 is a binding site for phosphate. Position 204 to 206 (204 to 206 (DYD)) interacts with substrate.

The protein belongs to the PNP/MTAP phosphorylase family. MTAP subfamily. Homohexamer. Dimer of a homotrimer.

It catalyses the reaction S-methyl-5'-thioadenosine + phosphate = 5-(methylsulfanyl)-alpha-D-ribose 1-phosphate + adenine. It participates in amino-acid biosynthesis; L-methionine biosynthesis via salvage pathway; S-methyl-5-thio-alpha-D-ribose 1-phosphate from S-methyl-5'-thioadenosine (phosphorylase route): step 1/1. In terms of biological role, catalyzes the reversible phosphorylation of S-methyl-5'-thioadenosine (MTA) to adenine and 5-methylthioribose-1-phosphate. Involved in the breakdown of MTA, a major by-product of polyamine biosynthesis. Responsible for the first step in the methionine salvage pathway after MTA has been generated from S-adenosylmethionine. Has broad substrate specificity with 6-aminopurine nucleosides as preferred substrates. The sequence is that of S-methyl-5'-thioadenosine phosphorylase (mntP) from Pyrococcus abyssi (strain GE5 / Orsay).